Consider the following 439-residue polypeptide: tRNA-2-methylthio-N(6)-dimethylallyladenosine synthase (439 aa).

One can recognise an MTTase N-terminal domain in the interval 2-119 (KKLYLKTHGC…LPDLLDSVIQ (118 aa)). Positions 11, 48, 82, 156, 160, and 163 each coordinate [4Fe-4S] cluster. The region spanning 142 to 374 (RAEGPSAFVS…QNRINVKAAE (233 aa)) is the Radical SAM core domain. The TRAM domain maps to 377-439 (QSMVGTQQRI…RPYSLWGEIC (63 aa)).

This sequence belongs to the methylthiotransferase family. MiaB subfamily. In terms of assembly, monomer. The cofactor is [4Fe-4S] cluster.

It is found in the cytoplasm. The catalysed reaction is N(6)-dimethylallyladenosine(37) in tRNA + (sulfur carrier)-SH + AH2 + 2 S-adenosyl-L-methionine = 2-methylsulfanyl-N(6)-dimethylallyladenosine(37) in tRNA + (sulfur carrier)-H + 5'-deoxyadenosine + L-methionine + A + S-adenosyl-L-homocysteine + 2 H(+). In terms of biological role, catalyzes the methylthiolation of N6-(dimethylallyl)adenosine (i(6)A), leading to the formation of 2-methylthio-N6-(dimethylallyl)adenosine (ms(2)i(6)A) at position 37 in tRNAs that read codons beginning with uridine. The polypeptide is tRNA-2-methylthio-N(6)-dimethylallyladenosine synthase (Coxiella burnetii (strain Dugway 5J108-111)).